Here is a 268-residue protein sequence, read N- to C-terminus: 4-hydroxy-tetrahydrodipicolinate reductase (268 aa).

NAD(+)-binding positions include 10–15, Glu36, 99–101, and 123–126; these read GSTGRM, GTT, and APNM. The active-site Proton donor/acceptor is the His156. His157 lines the (S)-2,3,4,5-tetrahydrodipicolinate pocket. The Proton donor role is filled by Lys160. Residue 166–167 participates in (S)-2,3,4,5-tetrahydrodipicolinate binding; it reads GT.

Belongs to the DapB family.

It is found in the cytoplasm. It catalyses the reaction (S)-2,3,4,5-tetrahydrodipicolinate + NAD(+) + H2O = (2S,4S)-4-hydroxy-2,3,4,5-tetrahydrodipicolinate + NADH + H(+). The catalysed reaction is (S)-2,3,4,5-tetrahydrodipicolinate + NADP(+) + H2O = (2S,4S)-4-hydroxy-2,3,4,5-tetrahydrodipicolinate + NADPH + H(+). Its pathway is amino-acid biosynthesis; L-lysine biosynthesis via DAP pathway; (S)-tetrahydrodipicolinate from L-aspartate: step 4/4. Catalyzes the conversion of 4-hydroxy-tetrahydrodipicolinate (HTPA) to tetrahydrodipicolinate. The protein is 4-hydroxy-tetrahydrodipicolinate reductase of Nitrosomonas europaea (strain ATCC 19718 / CIP 103999 / KCTC 2705 / NBRC 14298).